The primary structure comprises 236 residues: Ubiquinone biosynthesis O-methyltransferase (236 aa).

S-adenosyl-L-methionine-binding residues include Arg39, Gly59, Asp80, and Met124.

It belongs to the methyltransferase superfamily. UbiG/COQ3 family.

It catalyses the reaction a 3-demethylubiquinol + S-adenosyl-L-methionine = a ubiquinol + S-adenosyl-L-homocysteine + H(+). The catalysed reaction is a 3-(all-trans-polyprenyl)benzene-1,2-diol + S-adenosyl-L-methionine = a 2-methoxy-6-(all-trans-polyprenyl)phenol + S-adenosyl-L-homocysteine + H(+). It participates in cofactor biosynthesis; ubiquinone biosynthesis. O-methyltransferase that catalyzes the 2 O-methylation steps in the ubiquinone biosynthetic pathway. This is Ubiquinone biosynthesis O-methyltransferase from Shewanella halifaxensis (strain HAW-EB4).